A 481-amino-acid polypeptide reads, in one-letter code: MDSLFIIISLVIVILTTIFILSNLLSKKTILLPGKTGLPLIGESIDYFNKLRTGINEKFVMERKLKYASDVFKTSILGENMAFLTGPEGNKFLFSNENKLVQVWWPSSVDSIIKKSHNKSAQAESAKVRVLLPPFLRAHAIKHYVSTMDSELRQHVADFWVGRDEVEVCPLVRKYTFALAVRLFLSVRDPGELEALARPFEEAAGGIIAIPINFPGTRFNRGIKASQRIRKVIGGIIEQRRKDLSEGKATPSQDLLSHMIVEVDRRNAENPDIAPATDSDISSDILGLLIGGYDTINTTIVFVMMTLVEYPDVYDQVLKEQREIAASKAPGELLNWDDLGKMKYSWNVACEVLRLRPPTVGAFRVAKTDFNYGGYTIPKGWKLHYIPHFTQKNPDYFPNPEKFDPSRFAGDGPAPYTFVPFGGGPRMCPGNEYARAEILVFMHNIILRYNWEKLIPNEKVVIDPLPRPSQGLPIRLIPHKA.

Residues 4–24 (LFIIISLVIVILTTIFILSNL) traverse the membrane as a helical segment. Cysteine 428 serves as a coordination point for heme.

This sequence belongs to the cytochrome P450 family. The cofactor is heme. In terms of tissue distribution, highly expressed in roots. Expressed at very low levels in leaves and petals.

It localises to the membrane. The enzyme catalyses beta-amyrin + reduced [NADPH--hemoprotein reductase] + O2 = maniladiol + oxidized [NADPH--hemoprotein reductase] + H2O + H(+). It catalyses the reaction oleanolate + reduced [NADPH--hemoprotein reductase] + O2 = cochalate + oxidized [NADPH--hemoprotein reductase] + H2O + H(+). Functionally, involved in triterpenoid saponin biosynthesis in roots. Catalyzes the hydroxylation of beta-amyrin at the C-16 beta position to form maniladiol. Is also able to oxidize oleanolat to cochalate. Has weak activity catalyzing the three-step oxidation at C-28 of beta-amyrin to form oleanolate. The sequence is that of Beta-amyrin 16-beta-monooxygenase from Platycodon grandiflorus (Balloon flower).